Consider the following 364-residue polypeptide: Chorismate synthase (364 aa).

Arginine 47 contacts NADP(+). FMN contacts are provided by residues arginine 125 to serine 127, glycine 285, lysine 300 to serine 304, and arginine 327.

It belongs to the chorismate synthase family. In terms of assembly, homotetramer. FMNH2 is required as a cofactor.

It catalyses the reaction 5-O-(1-carboxyvinyl)-3-phosphoshikimate = chorismate + phosphate. It participates in metabolic intermediate biosynthesis; chorismate biosynthesis; chorismate from D-erythrose 4-phosphate and phosphoenolpyruvate: step 7/7. Functionally, catalyzes the anti-1,4-elimination of the C-3 phosphate and the C-6 proR hydrogen from 5-enolpyruvylshikimate-3-phosphate (EPSP) to yield chorismate, which is the branch point compound that serves as the starting substrate for the three terminal pathways of aromatic amino acid biosynthesis. This reaction introduces a second double bond into the aromatic ring system. This Dehalococcoides mccartyi (strain ATCC BAA-2100 / JCM 16839 / KCTC 5957 / BAV1) protein is Chorismate synthase.